The primary structure comprises 229 residues: ATP synthase subunit a (229 aa).

Transmembrane regions (helical) follow at residues 24-44 (RLCF…LLFC), 45-65 (LFDL…FMLF), 83-103 (LLFC…CFLC), 117-137 (FMDV…SLLC), 143-163 (FLRL…FFDF), 177-199 (CYFI…LYLL), and 206-228 (LQLF…FLLF).

The protein belongs to the ATPase A chain family. F-type ATPases have 2 components, CF(1) - the catalytic core - and CF(0) - the membrane proton channel. CF(1) has five subunits: alpha(3), beta(3), gamma(1), delta(1), epsilon(1). CF(0) has three main subunits: a, b and c.

It is found in the mitochondrion inner membrane. In terms of biological role, mitochondrial membrane ATP synthase (F(1)F(0) ATP synthase or Complex V) produces ATP from ADP in the presence of a proton gradient across the membrane which is generated by electron transport complexes of the respiratory chain. F-type ATPases consist of two structural domains, F(1) - containing the extramembraneous catalytic core and F(0) - containing the membrane proton channel, linked together by a central stalk and a peripheral stalk. During catalysis, ATP synthesis in the catalytic domain of F(1) is coupled via a rotary mechanism of the central stalk subunits to proton translocation. Key component of the proton channel; it may play a direct role in the translocation of protons across the membrane. This chain is ATP synthase subunit a (ATP6), found in Trypanosoma brucei brucei.